The chain runs to 85 residues: Large ribosomal subunit protein bL27 (85 aa).

Residues Met-1–Arg-20 are disordered.

This sequence belongs to the bacterial ribosomal protein bL27 family.

This chain is Large ribosomal subunit protein bL27, found in Citrobacter koseri (strain ATCC BAA-895 / CDC 4225-83 / SGSC4696).